Reading from the N-terminus, the 282-residue chain is 2-dehydro-3-deoxyphosphooctonate aldolase (282 aa).

This sequence belongs to the KdsA family.

The protein resides in the cytoplasm. The enzyme catalyses D-arabinose 5-phosphate + phosphoenolpyruvate + H2O = 3-deoxy-alpha-D-manno-2-octulosonate-8-phosphate + phosphate. The protein operates within carbohydrate biosynthesis; 3-deoxy-D-manno-octulosonate biosynthesis; 3-deoxy-D-manno-octulosonate from D-ribulose 5-phosphate: step 2/3. Its pathway is bacterial outer membrane biogenesis; lipopolysaccharide biosynthesis. This chain is 2-dehydro-3-deoxyphosphooctonate aldolase, found in Bartonella bacilliformis (strain ATCC 35685 / KC583 / Herrer 020/F12,63).